A 187-amino-acid chain; its full sequence is Resolvase OPG149 (187 aa).

It belongs to the RuvC family. Poxviruses-type subfamily. The cofactor is Mg(2+).

In terms of biological role, plays a role in DNA replication by cleaving viral DNA concatamers to yield unit-length viral genomes. The concatamer junctions contain inverted repeat sequences that can be extruded as cruciforms, yielding Holliday junctions that A22 protein cleaves. The protein is Resolvase OPG149 (OPG149) of Cynomys gunnisoni (Gunnison's prairie dog).